A 258-amino-acid polypeptide reads, in one-letter code: Ribosomal RNA small subunit methyltransferase J (258 aa).

S-adenosyl-L-methionine-binding positions include 123-124 and aspartate 177; that span reads ER. Residues 232 to 258 form a disordered region; the sequence is IDGPKPSHSLEGKSSRYDIYPKKALKA. Positions 239–252 are enriched in basic and acidic residues; it reads HSLEGKSSRYDIYP.

It belongs to the methyltransferase superfamily. RsmJ family.

The protein resides in the cytoplasm. It carries out the reaction guanosine(1516) in 16S rRNA + S-adenosyl-L-methionine = N(2)-methylguanosine(1516) in 16S rRNA + S-adenosyl-L-homocysteine + H(+). Its function is as follows. Specifically methylates the guanosine in position 1516 of 16S rRNA. This is Ribosomal RNA small subunit methyltransferase J from Pseudomonas putida (strain W619).